We begin with the raw amino-acid sequence, 361 residues long: Queuine tRNA-ribosyltransferase (361 aa).

The active-site Proton acceptor is the Asp-92. Substrate contacts are provided by residues 92 to 96 (DSGGF), Asp-146, Gln-189, and Gly-216. Residues 247–253 (GVGKPAD) form an RNA binding region. The active-site Nucleophile is Asp-266. The interval 271–275 (TRSGR) is RNA binding; important for wobble base 34 recognition. 4 residues coordinate Zn(2+): Cys-304, Cys-306, Cys-309, and His-335.

The protein belongs to the queuine tRNA-ribosyltransferase family. In terms of assembly, homodimer. Within each dimer, one monomer is responsible for RNA recognition and catalysis, while the other monomer binds to the replacement base PreQ1. Zn(2+) serves as cofactor.

It carries out the reaction 7-aminomethyl-7-carbaguanine + guanosine(34) in tRNA = 7-aminomethyl-7-carbaguanosine(34) in tRNA + guanine. It participates in tRNA modification; tRNA-queuosine biosynthesis. Catalyzes the base-exchange of a guanine (G) residue with the queuine precursor 7-aminomethyl-7-deazaguanine (PreQ1) at position 34 (anticodon wobble position) in tRNAs with GU(N) anticodons (tRNA-Asp, -Asn, -His and -Tyr). Catalysis occurs through a double-displacement mechanism. The nucleophile active site attacks the C1' of nucleotide 34 to detach the guanine base from the RNA, forming a covalent enzyme-RNA intermediate. The proton acceptor active site deprotonates the incoming PreQ1, allowing a nucleophilic attack on the C1' of the ribose to form the product. After dissociation, two additional enzymatic reactions on the tRNA convert PreQ1 to queuine (Q), resulting in the hypermodified nucleoside queuosine (7-(((4,5-cis-dihydroxy-2-cyclopenten-1-yl)amino)methyl)-7-deazaguanosine). The protein is Queuine tRNA-ribosyltransferase of Rickettsia typhi (strain ATCC VR-144 / Wilmington).